The following is a 271-amino-acid chain: Phosphate import ATP-binding protein PstB (271 aa).

One can recognise an ABC transporter domain in the interval 24–266; sequence MIGNDVSVYY…PDDQRTQDYI (243 aa). Position 56–63 (56–63) interacts with ATP; sequence GPSGCGKS.

The protein belongs to the ABC transporter superfamily. Phosphate importer (TC 3.A.1.7) family. The complex is composed of two ATP-binding proteins (PstB), two transmembrane proteins (PstC and PstA) and a solute-binding protein (PstS).

The protein resides in the cell inner membrane. The catalysed reaction is phosphate(out) + ATP + H2O = ADP + 2 phosphate(in) + H(+). Part of the ABC transporter complex PstSACB involved in phosphate import. Responsible for energy coupling to the transport system. This is Phosphate import ATP-binding protein PstB from Rhizobium meliloti (strain 1021) (Ensifer meliloti).